A 635-amino-acid chain; its full sequence is Threonine--tRNA ligase (635 aa).

A TGS domain is found at Met1 to Thr61. Residues Asp242–Pro533 form a catalytic region. Positions 333, 384, and 510 each coordinate Zn(2+).

The protein belongs to the class-II aminoacyl-tRNA synthetase family. As to quaternary structure, homodimer. It depends on Zn(2+) as a cofactor.

Its subcellular location is the cytoplasm. It catalyses the reaction tRNA(Thr) + L-threonine + ATP = L-threonyl-tRNA(Thr) + AMP + diphosphate + H(+). Its function is as follows. Catalyzes the attachment of threonine to tRNA(Thr) in a two-step reaction: L-threonine is first activated by ATP to form Thr-AMP and then transferred to the acceptor end of tRNA(Thr). Also edits incorrectly charged L-seryl-tRNA(Thr). The sequence is that of Threonine--tRNA ligase from Ralstonia nicotianae (strain ATCC BAA-1114 / GMI1000) (Ralstonia solanacearum).